Here is a 73-residue protein sequence, read N- to C-terminus: uncharacterized protein (73 aa).

A helical transmembrane segment spans residues 54–72 (VSFIVAPTVMQVQCLFFFI).

Its subcellular location is the membrane. This is an uncharacterized protein from Saccharomyces cerevisiae (strain ATCC 204508 / S288c) (Baker's yeast).